The chain runs to 211 residues: Mitotic spindle assembly checkpoint protein MAD2B (211 aa).

The region spanning 13 to 203 (QVVADVLSEF…SDILKMQLYV (191 aa)) is the HORMA domain. Positions 21–155 (EFLEVAVHLI…FTVLVHTREA (135 aa)) are mediates interaction with REV1 and REV3L and homodimerization.

In terms of assembly, homooligomer. Heterodimer with REV3L. This dimer forms the minimal DNA polymerase zeta complex (Pol-zeta2), with REV3L bearing DNA polymerase catalytic activity, although its activity is very low in this context. Component of the tetrameric Pol-zeta complex (Pol-zeta4), which consists of REV3L, MAD2L2, POLD2 and POLD3; Pol-zeta4 is the fully active form of DNA polymerase zeta. Component of the shieldin complex, consisting of SHLD1, SHLD2, SHLD3 and MAD2L2/REV7. Within the complex, SHLD2 forms a scaffold which interacts with a SHLD3-MAD2L2 subcomplex via its N-terminus, and with SHLD1 via its C-terminus. Interacts with REV1. Interacts with ADAM9. Interacts with CHAMP1. Interacts with FZR1 (in complex with the anaphase promoting complex APC). May interact with CDC20. Interacts with RAN. Interacts with ELK1; the interaction is direct and recruits MAD2L2 to ELK1-specific promoters. May interact with the JNK kinases MAPK8 and/or MAPK9 to stimulate ELK1 phosphorylation and transcriptional activity upon DNA damage. Interacts with TCF7L2; prevents its binding to promoters and negatively modulates its transcriptional activity. Interacts with YY1AP1. Interacts with PRCC; the interaction is direct. Interacts with POGZ. Interacts with ASTE1.

It localises to the nucleus. It is found in the cytoplasm. The protein resides in the cytoskeleton. Its subcellular location is the spindle. Adapter protein able to interact with different proteins and involved in different biological processes. Mediates the interaction between the error-prone DNA polymerase zeta catalytic subunit REV3L and the inserter polymerase REV1, thereby mediating the second polymerase switching in translesion DNA synthesis. Translesion DNA synthesis releases the replication blockade of replicative polymerases, stalled in presence of DNA lesions. Component of the shieldin complex, which plays an important role in repair of DNA double-stranded breaks (DSBs). During G1 and S phase of the cell cycle, the complex functions downstream of TP53BP1 to promote non-homologous end joining (NHEJ) and suppress DNA end resection. Mediates various NHEJ-dependent processes including immunoglobulin class-switch recombination, and fusion of unprotected telomeres. May also regulate another aspect of cellular response to DNA damage through regulation of the JNK-mediated phosphorylation and activation of the transcriptional activator ELK1. Inhibits the FZR1- and probably CDC20-mediated activation of the anaphase promoting complex APC thereby regulating progression through the cell cycle. Regulates TCF7L2-mediated gene transcription and may play a role in epithelial-mesenchymal transdifferentiation. The polypeptide is Mitotic spindle assembly checkpoint protein MAD2B (Mad2l2) (Rattus norvegicus (Rat)).